A 994-amino-acid chain; its full sequence is Glutamate [NMDA] receptor subunit 1 (994 aa).

The signal sequence occupies residues 1 to 23; that stretch reads MAADGFVYRWLLFGTTIVLLAEA. The Extracellular segment spans residues 24 to 570; that stretch reads AQRHTASDNP…TLVSFLQPFS (547 aa). 7 N-linked (GlcNAc...) asparagine glycosylation sites follow: asparagine 255, asparagine 311, asparagine 342, asparagine 394, asparagine 451, asparagine 478, and asparagine 498. Residues 527–529 and arginine 534 contribute to the glycine site; that span reads PLT. A helical transmembrane segment spans residues 571–591; that stretch reads NTLWILVMVSVHVVALVLYLL. Residues 592 to 648 are Cytoplasmic-facing; the sequence is DRFSPFGRFKLSHSDSNEEKALNLSSAVWFAWGVLLNSGIGEGTPRSFSARVLGMVW. Residues 649–669 form a helical membrane-spanning segment; the sequence is AGFAMIIVASYTANLAAFLVL. Residues 670–828 lie on the Extracellular side of the membrane; the sequence is ERPKTKLSGI…KTPNTLGLKN (159 aa). The N-linked (GlcNAc...) asparagine glycan is linked to asparagine 690. Positions 700 and 744 each coordinate glycine. The chain crosses the membrane as a helical span at residues 829–849; that stretch reads MAGVFILVGVGIAGGVGLIII. Residues 850-994 lie on the Cytoplasmic side of the membrane; the sequence is EVIYKKHQVK…YTSDVSHLVV (145 aa). The disordered stretch occupies residues 971-994; the sequence is RPQQNMLPPRYSPGYTSDVSHLVV. Residues 984 to 994 show a composition bias toward polar residues; sequence GYTSDVSHLVV.

The protein belongs to the glutamate-gated ion channel (TC 1.A.10.1) family. Forms a heteromeric NMDA channel with Nmdar2.

Its subcellular location is the cell membrane. It is found in the postsynaptic cell membrane. The protein resides in the postsynaptic density. Its function is as follows. NMDA receptor subtype of glutamate-gated ion channels with high calcium permeability and voltage-dependent sensitivity to magnesium. Mediated by glycine. This protein plays a key role in synaptic plasticity, synaptogenesis, excitotoxicity, memory acquisition and learning. It mediates neuronal functions in glutamate neurotransmission. Is involved in the cell surface targeting of NMDA receptors. Plays a role in associative learning and in long-term memory consolidation. This chain is Glutamate [NMDA] receptor subunit 1, found in Drosophila ananassae (Fruit fly).